The sequence spans 50 residues: uncharacterized protein (50 aa).

The tract at residues 28–50 (SKLSPVTNGGKTIGKSNKVSKND) is disordered. A compositionally biased stretch (polar residues) spans 29-50 (KLSPVTNGGKTIGKSNKVSKND).

This is an uncharacterized protein from Haemophilus influenzae (strain ATCC 51907 / DSM 11121 / KW20 / Rd).